Here is a 97-residue protein sequence, read N- to C-terminus: Co-chaperonin GroES (97 aa).

It belongs to the GroES chaperonin family. In terms of assembly, heptamer of 7 subunits arranged in a ring. Interacts with the chaperonin GroEL.

The protein resides in the cytoplasm. Its function is as follows. Together with the chaperonin GroEL, plays an essential role in assisting protein folding. The GroEL-GroES system forms a nano-cage that allows encapsulation of the non-native substrate proteins and provides a physical environment optimized to promote and accelerate protein folding. GroES binds to the apical surface of the GroEL ring, thereby capping the opening of the GroEL channel. This chain is Co-chaperonin GroES, found in Buchnera aphidicola subsp. Pemphigus spyrothecae.